The chain runs to 141 residues: Organic hydroperoxide resistance protein-like 1 (141 aa).

Residues 1 to 20 (MAVNYETKATNTGGRNGHVQ) form a disordered region.

Belongs to the OsmC/Ohr family.

This chain is Organic hydroperoxide resistance protein-like 1, found in Staphylococcus saprophyticus subsp. saprophyticus (strain ATCC 15305 / DSM 20229 / NCIMB 8711 / NCTC 7292 / S-41).